Here is an 84-residue protein sequence, read N- to C-terminus: Small ribosomal subunit protein uS17 (84 aa).

The protein belongs to the universal ribosomal protein uS17 family. As to quaternary structure, part of the 30S ribosomal subunit.

In terms of biological role, one of the primary rRNA binding proteins, it binds specifically to the 5'-end of 16S ribosomal RNA. The polypeptide is Small ribosomal subunit protein uS17 (Clostridium botulinum (strain 657 / Type Ba4)).